We begin with the raw amino-acid sequence, 891 residues long: MTLCNMNLYEFRQKYNYDVATKMMQQYLDIKFAHLDCLLLFRMGDFYELFYEDAILASNILGIALTKRGKNCEEEIPMCGVPYHALEHYLTKLITENYKVAICDQLETPEEAKKRGGYKAVVTRDVTRIITPGTIIEENLISAAEPNYLTSLVMTKNKKTASICYVDLSTSKIFIVNVPETEILNELARLKSREILLSENLKSSNLADSILKQFNCRITYQVDSFFAINKCEKIILDFYKIRDIKGIGEISSSQICAIGSILEYLSLTQKQNIPNLPIPKIINFHSYMTIDFSTRRNLEIVTNIQGNLHGSVLNTLNHTVTKQGGRLLYHFLSSPLTNIAKINRRLNITEFFYSNLGIVTRIRELLKNTSDIERCLTRITMNRSSGRDLLSIKYTLETAKIINGLFSESHSLNLPNFIGKIIKPLSGDAELYNLIDMSIREDAPNNLNDGGIIKHEFHPKVAQLNDLINNGKLHVEKLKDQYRKETGIDSLKISHNNVLGLFIDITAKNVNKILDPKFIHRQTTVNSVRYTTYELQNLENELVNAQTLVISLEKELYTDICRKVIEKSSYLRILANSLSGLDVFCNFAYIADEYNYTKPEFTNDLSFDIVKGRHPVVEAALLKTSKSFVYNDCHLSEAERICLITGPNMAGKSTYLRQNAIITIIAQIGSFVPAKSAKIGVVDKIFSRIGAADDLIKGQSTFMAEMLETSAILAQSTKNSLIILDEVGRGTSTYDGVSIAWSVLEYIHDKLKCRCLFATHYHELTVMKNFLPALQNYTIAIEESGKDILFLHNIILGTSNKSYGLHVAALAGLPTSVINRAAQILLKFEKISISKGKNIVSTASNNLSLFNFEPQKHISNSKLDEEFKTIDPDKISPKEALELIYKFKKLV.

Position 646–653 (Gly646–Ser653) interacts with ATP.

Belongs to the DNA mismatch repair MutS family.

Its function is as follows. This protein is involved in the repair of mismatches in DNA. It is possible that it carries out the mismatch recognition step. This protein has a weak ATPase activity. The chain is DNA mismatch repair protein MutS from Rickettsia typhi (strain ATCC VR-144 / Wilmington).